The primary structure comprises 230 residues: Complex I assembly factor TMEM126B, mitochondrial (230 aa).

S34 bears the Phosphoserine mark. 4 helical membrane passes run 72 to 92, 110 to 130, 141 to 161, and 199 to 219; these read IYQM…SNFL, LATL…IDAL, VFRS…SLAF, and IPLV…YAVF.

Belongs to the TMEM126 family. As to quaternary structure, part of the mitochondrial complex I assembly/MCIA complex that comprises at least the core subunits TMEM126B, NDUFAF1, ECSIT and ACAD9 and complement subunits such as COA1 and TMEM186. Associates with the intermediate 370 kDa subcomplex of incompletely assembled complex I. Interacts with TMEM70.

It localises to the mitochondrion membrane. As part of the MCIA complex, involved in the assembly of the mitochondrial complex I. Participates in constructing the membrane arm of complex I. The polypeptide is Complex I assembly factor TMEM126B, mitochondrial (Homo sapiens (Human)).